The sequence spans 1501 residues: Multidrug resistance protein CDR1 (1501 aa).

Positions 1–30 (MSDSKMSSQDESKLEKAISQDSSSENHSIN) are disordered. Over 1–513 (MSDSKMSSQD…NFLRMKGDPS (513 aa)) the chain is Cytoplasmic. The segment covering 8-18 (SQDESKLEKAI) has biased composition (basic and acidic residues). Residues 150–404 (LATEGFRHFQ…FEKMGWKCPQ (255 aa)) form the ABC transporter 1 domain. A helical membrane pass occupies residues 514–534 (IPIFSVFGQLVMGLILSSVFY). Asn-535 carries N-linked (GlcNAc...) asparagine glycosylation. The next 4 membrane-spanning stretches (helical) occupy residues 549 to 569 (AMFFAVLFNAFSSLLEIMSLF), 598 to 618 (LPVKLAMSMSFNFVFYFMVNF), 623 to 643 (GRFFFYWLMCIWCTFVMSHLF), and 655 to 675 (GAMTPATVLLLAMVIYTGFVI). N-linked (GlcNAc...) asparagine glycosylation occurs at Asn-724. Residues 765–785 (LGITIGFAVFFLAIYIALTEF) traverse the membrane as a helical segment. The Cytoplasmic portion of the chain corresponds to 786 to 1195 (NKGAMQKGEI…TIVQDWRSPG (410 aa)). Positions 859-1103 (FFWRDLTYQV…MINYFEKYGA (245 aa)) constitute an ABC transporter 2 domain. ATP is bound at residue 895-902 (GASGAGKT). Transmembrane regions (helical) follow at residues 1196-1216 (YIYSKIFLVVSAALFNGFSFF), 1230-1250 (FSVFMFFIPFNTLVQQMLPYF), 1281-1301 (IPYQVAVGTIAFFCWYYPLGL), 1315-1335 (GVLMWMLVTAFYVYTATMGQL), 1356-1376 (MCLNFCGVLAGPDVLPGFWIF), and 1467-1487 (FGIFIAFIAINIILTVIFYWL).

It belongs to the ABC transporter superfamily. ABCG family. PDR (TC 3.A.1.205) subfamily.

Its subcellular location is the membrane. Its function is as follows. Transporter, whose physiological function is not yet established. Confers resistance to the chemical cycloheximide. This Candida albicans (Yeast) protein is Multidrug resistance protein CDR1 (CDR1).